Here is a 432-residue protein sequence, read N- to C-terminus: Short/branched chain specific acyl-CoA dehydrogenase, mitochondrial (432 aa).

A mitochondrion-targeting transit peptide spans 1–33 (MEGLAVRLLRGSRLLRRNFLTCLSSWKIPPHVS). Position 70 is an N6-acetyllysine; alternate (Lys70). Lys70 is modified (N6-succinyllysine; alternate). FAD is bound by residues 174-183 (FCLSEAGAGS) and 207-209 (WIS). A substrate-binding site is contributed by Ser183. Ser183 is modified (phosphoserine). 2 residues coordinate substrate: Tyr229 and Tyr283. Lys284 is modified (N6-acetyllysine; alternate). An N6-succinyllysine; alternate modification is found at Lys284. Position 291-294 (291-294 (NEGR)) interacts with substrate. Residues Arg319, Gln330, and 387 to 391 (EWMGG) each bind FAD. The active-site Proton acceptor is Glu414. 416 to 418 (ASN) contacts FAD. Lys426 is subject to N6-acetyllysine.

Belongs to the acyl-CoA dehydrogenase family. In terms of assembly, homotetramer. It depends on FAD as a cofactor. As to expression, ubiquitously expressed.

The protein resides in the mitochondrion matrix. It carries out the reaction 2-methylbutanoyl-CoA + oxidized [electron-transfer flavoprotein] + H(+) = (2E)-2-methylbut-2-enoyl-CoA + reduced [electron-transfer flavoprotein]. The catalysed reaction is (2S)-2-methylbutanoyl-CoA + oxidized [electron-transfer flavoprotein] + H(+) = (2E)-2-methylbut-2-enoyl-CoA + reduced [electron-transfer flavoprotein]. It catalyses the reaction (2R)-2-methylbutanoyl-CoA + oxidized [electron-transfer flavoprotein] + H(+) = ethylacryloyl-CoA + reduced [electron-transfer flavoprotein]. The enzyme catalyses butanoyl-CoA + oxidized [electron-transfer flavoprotein] + H(+) = (2E)-butenoyl-CoA + reduced [electron-transfer flavoprotein]. It carries out the reaction 2-methylpropanoyl-CoA + oxidized [electron-transfer flavoprotein] + H(+) = 2-methylpropenoyl-CoA + reduced [electron-transfer flavoprotein]. The catalysed reaction is hexanoyl-CoA + oxidized [electron-transfer flavoprotein] + H(+) = (2E)-hexenoyl-CoA + reduced [electron-transfer flavoprotein]. It catalyses the reaction 2-methylhexanoyl-CoA + oxidized [electron-transfer flavoprotein] + H(+) = 2-methylhexenoyl-CoA + reduced [electron-transfer flavoprotein]. The enzyme catalyses valproyl-CoA + oxidized [electron-transfer flavoprotein] + H(+) = (2E)-2-propylpent-2-enoyl-CoA + reduced [electron-transfer flavoprotein]. It functions in the pathway lipid metabolism; mitochondrial fatty acid beta-oxidation. It participates in amino-acid degradation; L-isoleucine degradation. Competitively inhibited by valproyl-CoA. Functionally, short and branched chain specific acyl-CoA dehydrogenase that catalyzes the removal of one hydrogen from C-2 and C-3 of the fatty acyl-CoA thioester, resulting in the formation of trans-2-enoyl-CoA. Among the different mitochondrial acyl-CoA dehydrogenases, acts specifically on short and branched chain acyl-CoA derivatives such as (S)-2-methylbutyryl-CoA as well as short straight chain acyl-CoAs such as butyryl-CoA. Plays an important role in the metabolism of L-isoleucine by catalyzing the dehydrogenation of 2-methylbutyryl-CoA, one of the steps of the L-isoleucine catabolic pathway. Can also act on valproyl-CoA, a metabolite of valproic acid, an antiepileptic drug. This is Short/branched chain specific acyl-CoA dehydrogenase, mitochondrial from Homo sapiens (Human).